Here is a 436-residue protein sequence, read N- to C-terminus: Trigger factor (436 aa).

A PPIase FKBP-type domain is found at 161–246 (GMRVTMDFVG…LNKVEEQILP (86 aa)).

Belongs to the FKBP-type PPIase family. Tig subfamily.

The protein localises to the cytoplasm. The enzyme catalyses [protein]-peptidylproline (omega=180) = [protein]-peptidylproline (omega=0). Functionally, involved in protein export. Acts as a chaperone by maintaining the newly synthesized protein in an open conformation. Functions as a peptidyl-prolyl cis-trans isomerase. This is Trigger factor from Aeromonas hydrophila subsp. hydrophila (strain ATCC 7966 / DSM 30187 / BCRC 13018 / CCUG 14551 / JCM 1027 / KCTC 2358 / NCIMB 9240 / NCTC 8049).